The chain runs to 132 residues: Small ribosomal subunit protein uS11 (132 aa).

It belongs to the universal ribosomal protein uS11 family. In terms of assembly, part of the 30S ribosomal subunit.

Its function is as follows. Located on the platform of the 30S subunit. In Korarchaeum cryptofilum (strain OPF8), this protein is Small ribosomal subunit protein uS11 (rps11).